The sequence spans 606 residues: UPF0329 protein ECU06_0090 (606 aa).

The tract at residues 317 to 401 (KKEEERREEE…SREACSKERN (85 aa)) is disordered. Residues 328–353 (EKKRKEEVVQRNVEELLRGEEEEKKG) are compositionally biased toward basic and acidic residues. A compositionally biased stretch (basic residues) spans 354–367 (AKAKRKSKKKKKGS). Basic and acidic residues predominate over residues 381–401 (SENREAQEMEDSREACSKERN).

Belongs to the UPF0329 family.

The polypeptide is UPF0329 protein ECU06_0090 (Encephalitozoon cuniculi (strain GB-M1) (Microsporidian parasite)).